We begin with the raw amino-acid sequence, 798 residues long: Elongation factor G, mitochondrial (798 aa).

The transit peptide at 1–24 directs the protein to the mitochondrion; it reads MRVIRAAAALNSSCAASSRQGARY. In terms of domain architecture, tr-type G spans 97-383; the sequence is SMVRNIGIAA…AVCDYLPNPG (287 aa). GTP contacts are provided by residues 106-113, 181-185, and 235-238; these read AHIDSGKT, DTPGH, and NKMD.

This sequence belongs to the TRAFAC class translation factor GTPase superfamily. Classic translation factor GTPase family. EF-G/EF-2 subfamily.

Its subcellular location is the mitochondrion. It participates in protein biosynthesis; polypeptide chain elongation. Mitochondrial GTPase that catalyzes the GTP-dependent ribosomal translocation step during translation elongation. During this step, the ribosome changes from the pre-translocational (PRE) to the post-translocational (POST) state as the newly formed A-site-bound peptidyl-tRNA and P-site-bound deacylated tRNA move to the P and E sites, respectively. Catalyzes the coordinated movement of the two tRNA molecules, the mRNA and conformational changes in the ribosome. The chain is Elongation factor G, mitochondrial from Chaetomium globosum (strain ATCC 6205 / CBS 148.51 / DSM 1962 / NBRC 6347 / NRRL 1970) (Soil fungus).